Here is a 234-residue protein sequence, read N- to C-terminus: Sugar fermentation stimulation protein homolog (234 aa).

The protein belongs to the SfsA family.

This is Sugar fermentation stimulation protein homolog from Enterobacter sp. (strain 638).